Here is a 103-residue protein sequence, read N- to C-terminus: G0/G1 switch protein 2 (103 aa).

The segment at 80-103 is disordered; sequence LQEKGKQQDTVLGGRALSNRQHAS.

Directly interacts with BCL2; this interaction prevents the formation of the anti-apoptotic BAX-BCL2 complex. As to expression, widely expressed with highest levels in peripheral blood, skeletal muscle and heart, followed by kidney and liver.

It is found in the mitochondrion. Its function is as follows. Promotes apoptosis by binding to BCL2, hence preventing the formation of protective BCL2-BAX heterodimers. This Homo sapiens (Human) protein is G0/G1 switch protein 2 (G0S2).